Here is a 65-residue protein sequence, read N- to C-terminus: Double gene block protein 1 (65 aa).

Residues 1–41 (MDSQRTVELTNPRGRSKERGDSGGKQKNSMGRKIANDAISE) form a disordered region. Residues 15 to 24 (RSKERGDSGG) show a composition bias toward basic and acidic residues. The RNA-binding stretch occupies residues 17 to 43 (KERGDSGGKQKNSMGRKIANDAISESK).

This sequence belongs to the carmovirus double gene block protein 1 family. In terms of assembly, homodimer.

Cell-to-cell movement. Displays RNA-binding activity. The sequence is that of Double gene block protein 1 from Melon necrotic spot virus (MNSV).